The primary structure comprises 758 residues: MIVAHNLGFPRIGGQRELKWALESYWKEQLGQQELIQVTRELRALHWKQQQEAGLDLVPVGDFSWYDQVLDMSALLGVVPPRFGEIQDEVDLDTYFCMARGRAPGKKEVAACEMTKWFNTNYHYIVPEFQPQQAFRLASSTLFNQVAEAQALDFPIKPVLLGPLSFLWLGKSKGSTFDKLSLLDALLPVYGQVLHRLKTQGVEWVQIDEPILVLDLPPDWKAAFERAYSSLVNGGPKRLLATYFGALGDNTRLACQLPVEGLHIDLVSAPEQLAKVLDEFPSYKILSAGLVDGRNIWRNDLEASLAQLEALRERLDDRLWIAPSCSLLHSPMDLALESALDEELKSWLAFAVQKIEEVATLKRALVEGRDVVAQALADSAAAQASRRQSERIYRPEIRARMTEVNEDMTRRRHKYPVRAQVQREELKLPLYPTTTIGSFPQTPDIRKARRDFKAGRIAEPEYRRQMEAEIARAIQAQESYGLDVLVHGEAERNDMVEYFGEQLEGFAFTQNGWVQSYGSRCVKPPIIYGDVVRRQPMTVAWLRYAQSLTSRRVKGMLTGPVTLLQWSFVRDDQPRADTCLQLALVLRDEVRDLEQADIKLIQVDEPAFREGLPLRRVEWESYLAWAVRCFRVASSGVEDGTQIHTHMCYSEFNDIIHAIAALDADVITIETSRSDGELLAAFAAFEYPNEIGPGVYDIHSPVVPTEAQIVGLIKKAAEYIPAERLWVNPDCGLKTRAWPEVETALRTMVAAAHGLRSA.

Residues 16–19 (RELK) and Lys-116 each bind 5-methyltetrahydropteroyltri-L-glutamate. L-homocysteine is bound by residues 436–438 (IGS) and Glu-489. L-methionine-binding positions include 436–438 (IGS) and Glu-489. 5-methyltetrahydropteroyltri-L-glutamate is bound by residues 520 to 521 (RC) and Trp-566. Residue Asp-604 participates in L-homocysteine binding. Asp-604 is a binding site for L-methionine. Position 610 (Glu-610) interacts with 5-methyltetrahydropteroyltri-L-glutamate. Zn(2+) contacts are provided by His-646, Cys-648, and Glu-670. Residue His-699 is the Proton donor of the active site. Zn(2+) is bound at residue Cys-731.

Belongs to the vitamin-B12 independent methionine synthase family. It depends on Zn(2+) as a cofactor.

The catalysed reaction is 5-methyltetrahydropteroyltri-L-glutamate + L-homocysteine = tetrahydropteroyltri-L-glutamate + L-methionine. The protein operates within amino-acid biosynthesis; L-methionine biosynthesis via de novo pathway; L-methionine from L-homocysteine (MetE route): step 1/1. Catalyzes the transfer of a methyl group from 5-methyltetrahydrofolate to homocysteine resulting in methionine formation. In Nitrosococcus oceani (strain ATCC 19707 / BCRC 17464 / JCM 30415 / NCIMB 11848 / C-107), this protein is 5-methyltetrahydropteroyltriglutamate--homocysteine methyltransferase.